The following is a 600-amino-acid chain: MPEIRVTPLGAGQDVGRSCILVSISGKNVMLDCGMHMGYNDDRRFPDFSYITQSGRLTDFLDCVIISHFHLDHCGALPYFSEMVGYDGPIYMTHPTQAICPILLEDYRKIAVDKKGEANFFTSQMIKDCMKKVVAVHLHQTVQVDDELEIKAYYAGHVLGAAMFQIKVGSESVVYTGDYNMTPDRHLGAAWIDKCRPNLLITESTYATTIRDSKRCRERDFLKKVHETVERGGKVLIPVFALGRAQELCILLETFWERMNLKVPIYFSTGLTEKANHYYKLFITWTNQKIRKTFVQRNMFEFKHIKAFDRTFADNPGPMVVFATPGMLHAGQSLQIFRKWAGNEKNMVIMPGYCVQGTVGHKILSGQRKLEMEGRQMLEVKMQVEYMSFSAHADAKGIMQLVGQAEPESVLLVHGEAKKMEFLRQKIEQEFRVSCYMPANGETVTLPTSPSIPVGISLGLLKREMVQGLLPEAKKPRLLHGTLIMKDNNFRLVSSEQALKELGLAEHQLRFTCRVHLQDTRKEQETALRVYSHLKSTLKDHCVQHLPDGSVTVESILIQAAAHSEDPGTKVLLVSWTYQDEELGSFLTALLKNGLPQAPS.

H68, H70, D72, H73, H157, and D178 together coordinate Zn(2+). The HXHXDH motif motif lies at 68–73; it reads HFHLDH. The active site involves E203. A Glycyl lysine isopeptide (Lys-Gly) (interchain with G-Cter in SUMO) cross-link involves residue K381. Residue H414 coordinates Zn(2+). Glycyl lysine isopeptide (Lys-Gly) (interchain with G-Cter in SUMO) cross-links involve residues K462 and K475. Positions 469 to 479 match the Nuclear localization signal motif; that stretch reads LLPEAKKPRLL.

Belongs to the metallo-beta-lactamase superfamily. RNA-metabolizing metallo-beta-lactamase-like family. INTS11 subfamily. In terms of assembly, component of the Integrator complex, composed of core subunits INTS1, INTS2, INTS3, INTS4, INTS5, INTS6, INTS7, INTS8, INTS9/RC74, INTS10, INTS11/CPSF3L, INTS12, INTS13, INTS14 and INTS15. The core complex associates with protein phosphatase 2A subunits PPP2CA and PPP2R1A, to form the Integrator-PP2A (INTAC) complex. INTS11 is part of the RNA endonuclease subcomplex, composed of INTS4, INTS9, INTS11 and inositol hexakisphosphate (InsP6). Interacts with WDR73; interaction is required for the assembly of the RNA endonuclease subcomplex in the cytoplasm. Interacts with BRAT1; interaction is required for the assembly of the RNA endonuclease subcomplex and inhibits the endonuclease activity of INTS11 before formation of mature integrator complex. The cofactor is Zn(2+). Sumoylated; sumoylation regulates its subcellular location and is required for integrator complex integrity.

Its subcellular location is the nucleus. The protein localises to the cytoplasm. The RNA endonuclease activity is inhibited by BRAT1 that forms hyrogen bond and hydrophobic interactions with the active site. Functionally, RNA endonuclease component of the integrator complex, a multiprotein complex that terminates RNA polymerase II (Pol II) transcription in the promoter-proximal region of genes. The integrator complex provides a quality checkpoint during transcription elongation by driving premature transcription termination of transcripts that are unfavorably configured for transcriptional elongation: the complex terminates transcription by (1) catalyzing dephosphorylation of the C-terminal domain (CTD) of Pol II subunit POLR2A/RPB1 and SUPT5H/SPT5, (2) degrading the exiting nascent RNA transcript via endonuclease activity and (3) promoting the release of Pol II from bound DNA. The integrator complex is also involved in terminating the synthesis of non-coding Pol II transcripts, such as enhancer RNAs (eRNAs), small nuclear RNAs (snRNAs), telomerase RNAs and long non-coding RNAs (lncRNAs). Within the integrator complex, INTS11 constitutes the RNA endonuclease subunit that degrades exiting nascent RNA transcripts. Mediates recruitment of cytoplasmic dynein to the nuclear envelope, probably as component of the integrator complex. The chain is Integrator complex subunit 11 (Ints11) from Rattus norvegicus (Rat).